The chain runs to 849 residues: Neprilysin-1 (849 aa).

Residues 1–113 (MSQQHEATAA…LKESQQRRRL (113 aa)) lie on the Cytoplasmic side of the membrane. Positions 41 to 61 (QQQVQHQAPHQMQQQQQQQQQ) are enriched in low complexity. The tract at residues 41-63 (QQQVQHQAPHQMQQQQQQQQQNK) is disordered. Residues 114 to 134 (LVLAIAFTVLGAAIGALAIYF) traverse the membrane as a helical; Signal-anchor for type II membrane protein segment. The Extracellular portion of the chain corresponds to 135–849 (ASVHQRCHLY…MNPAEKCSVW (715 aa)). Over residues 146–155 (LEPDNDDRPN) the composition is skewed to basic and acidic residues. The disordered stretch occupies residues 146-167 (LEPDNDDRPNGRWNQDSGSAHE). The region spanning 172–849 (ICMTQECVRT…MNPAEKCSVW (678 aa)) is the Peptidase M13 domain. 5 disulfides stabilise this stretch: Cys173-Cys178, Cys196-Cys834, Cys204-Cys794, Cys260-Cys512, and Cys721-Cys846. N-linked (GlcNAc...) asparagine glycosylation is found at Asn309, Asn326, Asn393, Asn589, and Asn599. His684 lines the Zn(2+) pocket. The active site involves Glu685. His688 serves as a coordination point for Zn(2+). Asn709 carries N-linked (GlcNAc...) asparagine glycosylation. Residue Glu746 participates in Zn(2+) binding. The active-site Proton donor is the Asp750. A glycan (N-linked (GlcNAc...) asparagine) is linked at Asn778.

This sequence belongs to the peptidase M13 family. The cofactor is Zn(2+). As to expression, expressed in the testicular tube, near and in the seminal vesicles. In adults and third-instar larvae, expressed in the midgut and in the mushroom bodies of the brain and neurons in the pars intercerebralis. Also expressed in neurons of the ventral ganglion and imaginal disks (wing and leg) of third-instar larvae. In stage 17 embryos, expressed in the peripheral nervous system, pharynx and midgut.

The protein resides in the cell membrane. The catalysed reaction is Preferential cleavage of polypeptides between hydrophobic residues, particularly with Phe or Tyr at P1'.. Functionally, metalloendoprotease which functions in fertility and memory formation. Required in the dorsal paired medial neurons and alpha/beta mushroom body neurons for the proper formation of long-term and middle-term memories. Required in males to maximise egg-laying in female mates and is also required in females for their fertility. This Drosophila melanogaster (Fruit fly) protein is Neprilysin-1.